The chain runs to 332 residues: tRNA dimethylallyltransferase (332 aa).

30-37 (GPTAVGKT) contributes to the ATP binding site. 32 to 37 (TAVGKT) lines the substrate pocket. The interval 57–60 (DSMQ) is interaction with substrate tRNA.

Belongs to the IPP transferase family. Monomer. It depends on Mg(2+) as a cofactor.

It carries out the reaction adenosine(37) in tRNA + dimethylallyl diphosphate = N(6)-dimethylallyladenosine(37) in tRNA + diphosphate. Its function is as follows. Catalyzes the transfer of a dimethylallyl group onto the adenine at position 37 in tRNAs that read codons beginning with uridine, leading to the formation of N6-(dimethylallyl)adenosine (i(6)A). This is tRNA dimethylallyltransferase from Natranaerobius thermophilus (strain ATCC BAA-1301 / DSM 18059 / JW/NM-WN-LF).